A 1218-amino-acid polypeptide reads, in one-letter code: Thrombospondin type 1 domain-containing protein (1218 aa).

Disordered regions lie at residues 82–101, 189–240, 298–383, and 445–471; these read SAGF…PCSS, SLEE…SRTR, HTAN…VNGL, and GGKS…SHRG. Basic and acidic residues predominate over residues 201 to 210; it reads GYEEERERRS. The span at 315–375 shows a compositional bias: low complexity; the sequence is SSRFTSKASS…SSPLSSSPDS (61 aa). The TSP type-1 domain maps to 638–704; sequence SCITGPWSEW…RRKCNLGACP (67 aa). A helical membrane pass occupies residues 886–906; the sequence is GVSHLWISLCAGAVAAVVFLV. The tract at residues 1129–1153 is disordered; the sequence is RRRARRGRREGDSGEGGDCGEARKA.

Component of a complex, at least composed of cysteine repeat modular protein A (CRMPa), cysteine repeat modular protein B (CRMPb), micronemal protein 15 (MIC15) and thrombospondin type 1 domain-containing protein (TSP1).

The protein resides in the membrane. Required for rhoptry secretion. Plays a role in host cell invasion. The sequence is that of Thrombospondin type 1 domain-containing protein from Toxoplasma gondii.